We begin with the raw amino-acid sequence, 160 residues long: SsrA-binding protein (160 aa).

Belongs to the SmpB family.

It localises to the cytoplasm. Required for rescue of stalled ribosomes mediated by trans-translation. Binds to transfer-messenger RNA (tmRNA), required for stable association of tmRNA with ribosomes. tmRNA and SmpB together mimic tRNA shape, replacing the anticodon stem-loop with SmpB. tmRNA is encoded by the ssrA gene; the 2 termini fold to resemble tRNA(Ala) and it encodes a 'tag peptide', a short internal open reading frame. During trans-translation Ala-aminoacylated tmRNA acts like a tRNA, entering the A-site of stalled ribosomes, displacing the stalled mRNA. The ribosome then switches to translate the ORF on the tmRNA; the nascent peptide is terminated with the 'tag peptide' encoded by the tmRNA and targeted for degradation. The ribosome is freed to recommence translation, which seems to be the essential function of trans-translation. This chain is SsrA-binding protein, found in Mycobacterium leprae (strain Br4923).